Here is a 341-residue protein sequence, read N- to C-terminus: L-threonine 3-dehydrogenase (341 aa).

Residue cysteine 38 coordinates Zn(2+). Residues threonine 40 and histidine 43 each act as charge relay system in the active site. Residues histidine 63, glutamate 64, cysteine 93, cysteine 96, cysteine 99, and cysteine 107 each contribute to the Zn(2+) site. Residues isoleucine 175, aspartate 195, arginine 200, 262 to 264 (LGI), and 286 to 287 (IY) contribute to the NAD(+) site.

Belongs to the zinc-containing alcohol dehydrogenase family. In terms of assembly, homotetramer. Zn(2+) serves as cofactor.

The protein resides in the cytoplasm. It carries out the reaction L-threonine + NAD(+) = (2S)-2-amino-3-oxobutanoate + NADH + H(+). It functions in the pathway amino-acid degradation; L-threonine degradation via oxydo-reductase pathway; glycine from L-threonine: step 1/2. Catalyzes the NAD(+)-dependent oxidation of L-threonine to 2-amino-3-ketobutyrate. The chain is L-threonine 3-dehydrogenase from Shigella boydii serotype 4 (strain Sb227).